A 251-amino-acid polypeptide reads, in one-letter code: PF03932 family protein CutC (251 aa).

The protein belongs to the CutC family.

It is found in the cytoplasm. In Bacteroides fragilis (strain YCH46), this protein is PF03932 family protein CutC.